The following is a 734-amino-acid chain: Photosystem I P700 chlorophyll a apoprotein A2 (734 aa).

8 consecutive transmembrane segments (helical) span residues Ile-46–Ala-69, Leu-135–Gln-158, Leu-175–Ile-199, Ile-273–Tyr-291, Leu-330–Tyr-353, Ala-369–Val-395, Ala-417–His-439, and Phe-517–Val-535. Positions 559 and 568 each coordinate [4Fe-4S] cluster. The next 2 helical transmembrane spans lie at Ala-575 to Trp-596 and Leu-643 to Ile-665. 3 residues coordinate chlorophyll a: His-654, Met-662, and Tyr-670. Trp-671 contacts phylloquinone. A helical membrane pass occupies residues Leu-707–Ala-727.

It belongs to the PsaA/PsaB family. The PsaA/B heterodimer binds the P700 chlorophyll special pair and subsequent electron acceptors. PSI consists of a core antenna complex that captures photons, and an electron transfer chain that converts photonic excitation into a charge separation. The eukaryotic PSI reaction center is composed of at least 11 subunits. P700 is a chlorophyll a/chlorophyll a' dimer, A0 is one or more chlorophyll a, A1 is one or both phylloquinones and FX is a shared 4Fe-4S iron-sulfur center. serves as cofactor.

Its subcellular location is the plastid. The protein resides in the chloroplast thylakoid membrane. It carries out the reaction reduced [plastocyanin] + hnu + oxidized [2Fe-2S]-[ferredoxin] = oxidized [plastocyanin] + reduced [2Fe-2S]-[ferredoxin]. Functionally, psaA and PsaB bind P700, the primary electron donor of photosystem I (PSI), as well as the electron acceptors A0, A1 and FX. PSI is a plastocyanin/cytochrome c6-ferredoxin oxidoreductase, converting photonic excitation into a charge separation, which transfers an electron from the donor P700 chlorophyll pair to the spectroscopically characterized acceptors A0, A1, FX, FA and FB in turn. Oxidized P700 is reduced on the lumenal side of the thylakoid membrane by plastocyanin or cytochrome c6. The sequence is that of Photosystem I P700 chlorophyll a apoprotein A2 from Cyanidium caldarium (Red alga).